The following is an 866-amino-acid chain: E3 ubiquitin-protein ligase RNF216 (866 aa).

Disordered regions lie at residues 46 to 117 (LVTP…NPRS), 131 to 161 (YTES…SAAL), and 211 to 240 (EFPG…HPLG). Residues 55-76 (EEEDLDDDVILTEDDSEDDYGE) show a composition bias toward acidic residues. Residues Leu-80, Thr-89, and Lys-100 each participate in a glycyl lysine isopeptide (Lys-Gly) (interchain with G-Cter in SUMO2) cross-link. Residues 137 to 156 (LETQNQSSEDSETELLSNLG) are compositionally biased toward polar residues. Residues Lys-351 and Lys-354 each participate in a glycyl lysine isopeptide (Lys-Gly) (interchain with G-Cter in SUMO2) cross-link. Ser-419 carries the post-translational modification Phosphoserine. Glycyl lysine isopeptide (Lys-Gly) (interchain with G-Cter in SUMO2) cross-links involve residues Lys-425, Lys-430, Lys-448, Lys-459, and Lys-485. The stretch at 475 to 491 (VQQEQEFYEQKIKEMAE) forms a coiled coil. The segment at 511-728 (QLIECRCCYG…SPGAPCQECS (218 aa)) is TRIAD supradomain. The Zn(2+) site is built by Cys-515, Cys-518, Cys-537, Cys-540, Cys-605, and Cys-608. An RING-type 1 zinc finger spans residues 515–564 (CRCCYGEFPFEELTQCADAHLFCKECLIRYAQEAVFGSGKLELSCMEGSC). An IBR-type zinc finger spans residues 583-648 (YKYYERKAEE…LWKEHNGLTC (66 aa)). Residue Lys-619 forms a Glycyl lysine isopeptide (Lys-Gly) (interchain with G-Cter in SUMO2) linkage. The Zn(2+) site is built by Cys-623, Cys-628, Cys-633, Cys-636, His-643, and Cys-648. Residues Lys-658 and Lys-666 each participate in a glycyl lysine isopeptide (Lys-Gly) (interchain with G-Cter in SUMO2) cross-link. Zn(2+)-binding residues include Cys-675 and Cys-678. The RING-type 2; atypical zinc finger occupies 675-703 (CHKCGTGLIKSEGCNRMSCRCGAQMCYLC). Residue Cys-688 is part of the active site. 5 residues coordinate Zn(2+): Cys-693, Cys-695, Cys-700, Cys-703, and His-716. The residue at position 719 (Ser-719) is a Phosphoserine; by MAPK1. Cys-724 is a Zn(2+) binding site. Positions 737-763 (TEDDEKLIEEIQKEAEEEQKRKNGENT) form a coiled coil. Residues Lys-765 and Lys-773 each participate in a glycyl lysine isopeptide (Lys-Gly) (interchain with G-Cter in SUMO2) cross-link.

In terms of assembly, interacts with UBE2L3 and to some extent with UBE2L6. Interacts with TRAF3, TLR3, TLR4, TLR5 and TLR9. Isoform 3/ZIN binds RIPK1. As to quaternary structure, (Microbial infection) Isoform 3/ZIN binds RIPK1 and HIV Vif. In terms of processing, auto-ubiquitinated. Phosphorylation at Ser-719 enhances acceptor ubiquitin binding and chain-type specificity towards 'Lys-63' di-ubiquitin but not di-ubiquitin with other linkage types. Ubiquitous, with the highest levels of expression in testis and peripheral blood leukocytes.

Its subcellular location is the cytoplasm. It is found in the cytoplasmic vesicle. It localises to the clathrin-coated vesicle. The enzyme catalyses S-ubiquitinyl-[E2 ubiquitin-conjugating enzyme]-L-cysteine + [acceptor protein]-L-lysine = [E2 ubiquitin-conjugating enzyme]-L-cysteine + N(6)-ubiquitinyl-[acceptor protein]-L-lysine.. It participates in protein modification; protein ubiquitination. Its activity is regulated as follows. Allosterically activated by 'Lys-63'-linked di-ubiquitin. E3 ubiquitin ligase which accepts ubiquitin from specific E2 ubiquitin-conjugating enzymes, and then transfers it to substrates promoting their ubiquitination. Plays a role in the regulation of antiviral responses by promoting the degradation of TRAF3, TLR4 and TLR9. In turn, down-regulates NF-kappa-B and IRF3 activation as well as beta interferon production. Also participates in the regulation of autophagy by ubiquitinating BECN1 leading to its degradation and autophagy inhibition. Plays a role in ARC-dependent synaptic plasticity by mediating ARC ubiquitination resulting in its rapid proteasomal degradation. Plays aso an essential role in spermatogenesis and male fertility. Mechanistically, regulates meiosis by promoting the degradation of PRKACB through the ubiquitin-mediated lysosome pathway. Modulates the gonadotropin-releasing hormone signal pathway by affecting the stability of STAU2 that is required for the microtubule-dependent transport of neuronal RNA from the cell body to the dendrite. Functionally, inhibits TNF and IL-1 mediated activation of NF-kappa-B. Promotes TNF and RIP mediated apoptosis. This chain is E3 ubiquitin-protein ligase RNF216 (RNF216), found in Homo sapiens (Human).